The primary structure comprises 580 residues: 2-succinyl-5-enolpyruvyl-6-hydroxy-3-cyclohexene-1-carboxylate synthase (580 aa).

The protein belongs to the TPP enzyme family. MenD subfamily. In terms of assembly, homodimer. Mg(2+) serves as cofactor. It depends on Mn(2+) as a cofactor. The cofactor is thiamine diphosphate.

It catalyses the reaction isochorismate + 2-oxoglutarate + H(+) = 5-enolpyruvoyl-6-hydroxy-2-succinyl-cyclohex-3-ene-1-carboxylate + CO2. It participates in quinol/quinone metabolism; 1,4-dihydroxy-2-naphthoate biosynthesis; 1,4-dihydroxy-2-naphthoate from chorismate: step 2/7. The protein operates within quinol/quinone metabolism; menaquinone biosynthesis. Catalyzes the thiamine diphosphate-dependent decarboxylation of 2-oxoglutarate and the subsequent addition of the resulting succinic semialdehyde-thiamine pyrophosphate anion to isochorismate to yield 2-succinyl-5-enolpyruvyl-6-hydroxy-3-cyclohexene-1-carboxylate (SEPHCHC). This is 2-succinyl-5-enolpyruvyl-6-hydroxy-3-cyclohexene-1-carboxylate synthase from Listeria monocytogenes serotype 4b (strain F2365).